The sequence spans 219 residues: 23.6 kDa heat shock protein, mitochondrial (219 aa).

The N-terminal 29 residues, 1–29 (MALARQCLSKRLAAGCALARPLHAASPVA), are a transit peptide targeting the mitochondrion. The sHSP domain maps to 104–219 (QVAETLTRPL…KRSVTEVKVR (116 aa)).

It belongs to the small heat shock protein (HSP20) family. May form oligomeric structures.

Its subcellular location is the mitochondrion. This is 23.6 kDa heat shock protein, mitochondrial (HSP23.6) from Oryza sativa subsp. japonica (Rice).